The following is a 246-amino-acid chain: UL16-binding protein 6 (246 aa).

Positions Met1–Ala25 are cleaved as a signal peptide. Positions Asp29–Glu117 are MHC class I alpha-1 like. An intrachain disulfide couples Cys50 to Cys66. Residues Asn68 and Asn82 are each glycosylated (N-linked (GlcNAc...) asparagine). Positions Pro118–Gly210 are MHC class I alpha-2 like. Cysteines 127 and 190 form a disulfide. The GPI-anchor amidated glycine moiety is linked to residue Gly218. Positions Thr219–Ile246 are cleaved as a propeptide — removed in mature form.

Belongs to the MHC class I family. Interacts with KLRK1/NKG2D. In terms of assembly, (Microbial infection) In CMV-infected cells, interacts with the viral glycoprotein UL16; this interaction causes relocalization from the cell surface to the cytoplasm and prevents binding to and activation of KLRK1/NKG2D, providing CMV with an immune evasion mechanism. In terms of tissue distribution, widely expressed. Expressed in trachea. Constitutively expressed in peripheral blood mononuclear cells, including B-cells and natural killer cells, as well as CD4+ and CD8+ T-cells and monocytes. Tends to be up-regulated in various lymphoid malignancies, including chronic lymphocytic leukemia.

It localises to the cell membrane. Its subcellular location is the endoplasmic reticulum. Functionally, binds and activates the KLRK1/NKG2D receptor, mediating natural killer cell cytotoxicity. This chain is UL16-binding protein 6 (RAET1L), found in Homo sapiens (Human).